The following is a 219-amino-acid chain: Probable GTP-binding protein EngB (219 aa).

Positions 24–207 (VQPEVAFAGR…HALIESWVRP (184 aa)) constitute an EngB-type G domain. GTP contacts are provided by residues 32 to 39 (GRSNAGKS), 59 to 63 (GRTQH), 81 to 84 (DLPG), 148 to 151 (TKCD), and 185 to 188 (LFSA). Mg(2+)-binding residues include serine 39 and threonine 61.

Belongs to the TRAFAC class TrmE-Era-EngA-EngB-Septin-like GTPase superfamily. EngB GTPase family. Mg(2+) serves as cofactor.

Necessary for normal cell division and for the maintenance of normal septation. This is Probable GTP-binding protein EngB from Burkholderia mallei (strain ATCC 23344).